We begin with the raw amino-acid sequence, 176 residues long: RNA polymerase sigma factor SigO (176 aa).

A Polymerase core binding motif is present at residues 30–43 (DARSLDELFKQFYK). The H-T-H motif DNA-binding region spans 139-158 (MQEIADSLGESRQNISNIHK).

This sequence belongs to the sigma-70 factor family. As to quaternary structure, interacts with RNA polymerase.

In terms of biological role, sigma factors are initiation factors that promote the attachment of RNA polymerase to specific initiation sites and are then released. Together with its coactivator RsoA, positively regulates the expression of at least three operons, including oxdC-yvrL, sigO-rsoA and yvrJ. Required for the acid stress-dependent induction of the oxalate decarboxylase oxdC. The protein is RNA polymerase sigma factor SigO (sigO) of Bacillus subtilis (strain 168).